Consider the following 287-residue polypeptide: Inorganic pyrophosphatase (287 aa).

Position 79 (Arg79) interacts with diphosphate. Positions 116, 121, and 153 each coordinate Mg(2+).

This sequence belongs to the PPase family. Mg(2+) serves as cofactor.

It is found in the cytoplasm. The enzyme catalyses diphosphate + H2O = 2 phosphate + H(+). This chain is Inorganic pyrophosphatase (IPP1), found in Eremothecium gossypii (strain ATCC 10895 / CBS 109.51 / FGSC 9923 / NRRL Y-1056) (Yeast).